The following is a 545-amino-acid chain: ATP synthase subunit alpha (545 aa).

172–179 (GDRKTGKT) serves as a coordination point for ATP. Positions 511–545 (FQTTDGTPVINEPEARPLGDDEVTKSQITVSRKTQ) are disordered. Basic and acidic residues predominate over residues 523-534 (PEARPLGDDEVT). Positions 535–545 (KSQITVSRKTQ) are enriched in polar residues.

Belongs to the ATPase alpha/beta chains family. F-type ATPases have 2 components, CF(1) - the catalytic core - and CF(0) - the membrane proton channel. CF(1) has five subunits: alpha(3), beta(3), gamma(1), delta(1), epsilon(1). CF(0) has three main subunits: a(1), b(2) and c(9-12). The alpha and beta chains form an alternating ring which encloses part of the gamma chain. CF(1) is attached to CF(0) by a central stalk formed by the gamma and epsilon chains, while a peripheral stalk is formed by the delta and b chains.

The protein resides in the cell membrane. The catalysed reaction is ATP + H2O + 4 H(+)(in) = ADP + phosphate + 5 H(+)(out). Functionally, produces ATP from ADP in the presence of a proton gradient across the membrane. The alpha chain is a regulatory subunit. In Corynebacterium jeikeium (strain K411), this protein is ATP synthase subunit alpha.